The sequence spans 421 residues: Serine--tRNA ligase (421 aa).

229–231 (TAE) provides a ligand contact to L-serine. Position 260-262 (260-262 (RAE)) interacts with ATP. Glu283 serves as a coordination point for L-serine. 347-350 (EISS) lines the ATP pocket. Ser383 contacts L-serine.

The protein belongs to the class-II aminoacyl-tRNA synthetase family. Type-1 seryl-tRNA synthetase subfamily. In terms of assembly, homodimer. The tRNA molecule binds across the dimer.

The protein resides in the cytoplasm. It catalyses the reaction tRNA(Ser) + L-serine + ATP = L-seryl-tRNA(Ser) + AMP + diphosphate + H(+). It carries out the reaction tRNA(Sec) + L-serine + ATP = L-seryl-tRNA(Sec) + AMP + diphosphate + H(+). Its pathway is aminoacyl-tRNA biosynthesis; selenocysteinyl-tRNA(Sec) biosynthesis; L-seryl-tRNA(Sec) from L-serine and tRNA(Sec): step 1/1. Catalyzes the attachment of serine to tRNA(Ser). Is also able to aminoacylate tRNA(Sec) with serine, to form the misacylated tRNA L-seryl-tRNA(Sec), which will be further converted into selenocysteinyl-tRNA(Sec). This Desulfitobacterium hafniense (strain DSM 10664 / DCB-2) protein is Serine--tRNA ligase.